A 320-amino-acid polypeptide reads, in one-letter code: o-succinylbenzoate synthase (320 aa).

K133 (proton donor) is an active-site residue. Mg(2+) is bound by residues D161, E190, and D213. The active-site Proton acceptor is K235.

It belongs to the mandelate racemase/muconate lactonizing enzyme family. MenC type 1 subfamily. A divalent metal cation is required as a cofactor.

The catalysed reaction is (1R,6R)-6-hydroxy-2-succinyl-cyclohexa-2,4-diene-1-carboxylate = 2-succinylbenzoate + H2O. It participates in quinol/quinone metabolism; 1,4-dihydroxy-2-naphthoate biosynthesis; 1,4-dihydroxy-2-naphthoate from chorismate: step 4/7. Its pathway is quinol/quinone metabolism; menaquinone biosynthesis. Functionally, converts 2-succinyl-6-hydroxy-2,4-cyclohexadiene-1-carboxylate (SHCHC) to 2-succinylbenzoate (OSB). This chain is o-succinylbenzoate synthase, found in Salmonella dublin (strain CT_02021853).